A 262-amino-acid polypeptide reads, in one-letter code: Hydroxyethylthiazole kinase (262 aa).

Met-41 is a substrate binding site. Residues Arg-117 and Ser-163 each contribute to the ATP site. Residue Gly-190 participates in substrate binding.

This sequence belongs to the Thz kinase family. Mg(2+) serves as cofactor.

The enzyme catalyses 5-(2-hydroxyethyl)-4-methylthiazole + ATP = 4-methyl-5-(2-phosphooxyethyl)-thiazole + ADP + H(+). It participates in cofactor biosynthesis; thiamine diphosphate biosynthesis; 4-methyl-5-(2-phosphoethyl)-thiazole from 5-(2-hydroxyethyl)-4-methylthiazole: step 1/1. Catalyzes the phosphorylation of the hydroxyl group of 4-methyl-5-beta-hydroxyethylthiazole (THZ). This is Hydroxyethylthiazole kinase from Levilactobacillus brevis (strain ATCC 367 / BCRC 12310 / CIP 105137 / JCM 1170 / LMG 11437 / NCIMB 947 / NCTC 947) (Lactobacillus brevis).